The chain runs to 93 residues: Alpha-defensin 13 (93 aa).

The signal sequence occupies residues 1–19; that stretch reads MKTLVLLSALVLLAFQVQA. Residues 20-58 constitute a propeptide that is removed on maturation; it reads DPIQNTDEETKTEEQPGEEDQAVSVSFGDPEGTSLQEES. The interval 22 to 54 is disordered; sequence IQNTDEETKTEEQPGEEDQAVSVSFGDPEGTSL. 3 cysteine pairs are disulfide-bonded: C64–C92, C66–C81, and C71–C91.

This sequence belongs to the alpha-defensin family. As to expression, paneth cells of the small bowel.

The protein localises to the secreted. Its function is as follows. Probably contributes to the antimicrobial barrier function of the small bowel mucosa. The protein is Alpha-defensin 13 (Defa13) of Mus musculus (Mouse).